The following is a 437-amino-acid chain: Sperm-associated antigen 4 protein (437 aa).

The segment covering 1–12 (MRRSSRPGSASS) has biased composition (low complexity). Positions 1–88 (MRRSSRPGSA…KPAPRSHNWQ (88 aa)) are disordered. 2 stretches are compositionally biased toward polar residues: residues 19-31 (NFFS…SITS) and 72-88 (WAGS…HNWQ). Helical transmembrane passes span 135-155 (FLSL…DVLV) and 166-186 (FLFT…LGLL). Residues 197–244 (KEMLTLSEYHERVRSQGQQLQQLQAELDKLHKEVSTVRAANSERVAKL) adopt a coiled-coil conformation. In terms of domain architecture, SUN spans 265–425 (GASIDLQKTS…YRVRAHGVRT (161 aa)).

As to quaternary structure, homodimer. Interacts with ODF1. May associate with microtubules. Interacts with SUN3 and SYNE1; suggesting the formation of a spermatogenesis-specific LINC complex; a SUN domain-based heterotrimer with SUN3 may associate with SYNE1. Interacts with SEPT12 and LMNB1; during spermatogenesis. In terms of tissue distribution, predominantly epressed in testis. Expressed in ejaculated spermatozoa (at protein level).

Its subcellular location is the membrane. It localises to the cytoplasm. It is found in the cytoskeleton. The protein localises to the flagellum axoneme. The protein resides in the nucleus envelope. Its subcellular location is the nucleus inner membrane. Functionally, involved in spermatogenesis. Required for sperm head formation but not required to establish and maintain general polarity of the sperm head. Required for anchoring and organization of the manchette. Required for targeting of SUN3 and probably SYNE1 through a probable SUN1:SYNE3 LINC complex to the nuclear envelope and involved in accurate posterior sperm head localization of the complex. May anchor SUN3 the nuclear envelope. Involved in maintenance of the nuclear envelope integrity. May assist the organization and assembly of outer dense fibers (ODFs), a specific structure of the sperm tail. In Homo sapiens (Human), this protein is Sperm-associated antigen 4 protein (SPAG4).